A 208-amino-acid polypeptide reads, in one-letter code: Imidazoleglycerol-phosphate dehydratase (208 aa).

This sequence belongs to the imidazoleglycerol-phosphate dehydratase family.

It is found in the cytoplasm. It catalyses the reaction D-erythro-1-(imidazol-4-yl)glycerol 3-phosphate = 3-(imidazol-4-yl)-2-oxopropyl phosphate + H2O. The protein operates within amino-acid biosynthesis; L-histidine biosynthesis; L-histidine from 5-phospho-alpha-D-ribose 1-diphosphate: step 6/9. In Arthrobacter sp. (strain FB24), this protein is Imidazoleglycerol-phosphate dehydratase.